We begin with the raw amino-acid sequence, 892 residues long: DNA mismatch repair protein MutS (892 aa).

634–641 (GPNMGGKS) serves as a coordination point for ATP.

Belongs to the DNA mismatch repair MutS family.

This protein is involved in the repair of mismatches in DNA. It is possible that it carries out the mismatch recognition step. This protein has a weak ATPase activity. In Paraburkholderia phymatum (strain DSM 17167 / CIP 108236 / LMG 21445 / STM815) (Burkholderia phymatum), this protein is DNA mismatch repair protein MutS.